The primary structure comprises 338 residues: Popeye domain-containing protein 1-A (338 aa).

Topologically, residues 1–40 (MTTESIFITTLPMDFNSQFDNITIGLNDNETLCENWREIH) are extracellular. N-linked (GlcNAc...) asparagine glycosylation is found at asparagine 21 and asparagine 29. A helical transmembrane segment spans residues 41 to 61 (HLVFHLANTCFAAGLVIPSTL). Over 62-65 (NLHM) the chain is Cytoplasmic. Residues 66-86 (LFLRGMLCLGCTFFIIWAVLF) form a helical membrane-spanning segment. The Extracellular segment spans residues 87-91 (RCALD). Residues 92-112 (IMIWNATFLSINFMHFVYLVY) traverse the membrane as a helical segment. The Cytoplasmic segment spans residues 113 to 338 (KKRPIKIKKE…VGPLSHAVFC (226 aa)). Residues 296–317 (TNDNEDGLQNFLRGTSTTSSQR) form a disordered region. Polar residues predominate over residues 307–317 (LRGTSTTSSQR).

Belongs to the popeye family. As to expression, expressed in the heart.

The protein localises to the lateral cell membrane. The protein resides in the cell junction. Its subcellular location is the tight junction. It is found in the membrane. Cell adhesion molecule involved in the establishment and/or maintenance of cell integrity. Plays a role in vamp3-mediated vesicular transport and recycling of different receptor molecules. May be involved in the formation and regulation of the tight junction (TJ) paracellular permeability barrier in epithelial cells. May induce primordial adhesive contact and aggregation of epithelial cells in a Ca(2+)-independent manner. May be involved in epithelial movement during corneal sheet formation and regeneration. May play a role in the regulation of cell shape and movement by modulating the Rho-GTPase activity. May also be involved in striated muscle regeneration and in the regulation of cell spreading. The polypeptide is Popeye domain-containing protein 1-A (popdc1-a) (Xenopus laevis (African clawed frog)).